Here is a 121-residue protein sequence, read N- to C-terminus: Large ribosomal subunit protein bL12 (121 aa).

It belongs to the bacterial ribosomal protein bL12 family. In terms of assembly, homodimer. Part of the ribosomal stalk of the 50S ribosomal subunit. Forms a multimeric L10(L12)X complex, where L10 forms an elongated spine to which 2 to 4 L12 dimers bind in a sequential fashion. Binds GTP-bound translation factors.

Its function is as follows. Forms part of the ribosomal stalk which helps the ribosome interact with GTP-bound translation factors. Is thus essential for accurate translation. The polypeptide is Large ribosomal subunit protein bL12 (Pseudomonas savastanoi pv. phaseolicola (strain 1448A / Race 6) (Pseudomonas syringae pv. phaseolicola (strain 1448A / Race 6))).